The sequence spans 309 residues: Mitochondrial brown fat uncoupling protein 1 (309 aa).

The Mitochondrial intermembrane segment spans residues 1-10 (MLRAPGSDAP). The chain crosses the membrane as a helical span at residues 11 to 32 (PTLSVRIAAAAGAACLADMITF). Solcar repeat units follow at residues 11–104 (PTLS…VREW), 113–203 (ASLG…MKEA), and 212–297 (DDLP…LKRE). Residues 33–75 (PLDTAKVRLQIQGEGQGQPPRAPRYRGVLGTVATLARTEGLQK) lie on the Mitochondrial matrix side of the membrane. A fatty acid 16:0-binding site is contributed by R58. The chain crosses the membrane as a helical span at residues 76–98 (LYSGLPAGLQRQVGFASLRIGLY). The Mitochondrial intermembrane segment spans residues 99 to 118 (DSVREWLSPGQGAAASLGSR). Residues 119 to 135 (ISAGVMTGGAAVFIGQP) form a helical membrane-spanning segment. The Mitochondrial matrix segment spans residues 136 to 180 (TEVVKVRLQAQSHLHGRKPRYTGTYNAYRIIATTEGLTGLWKGTT). The chain crosses the membrane as a helical span at residues 181–197 (PNLMRNVIINCTELVTY). Over 198 to 214 (DLMKEALVKNHLLADDL) the chain is Mitochondrial intermembrane. The helical transmembrane segment at 215–234 (PCHFLSALVAGFCTTVLSSP) threads the bilayer. The Mitochondrial matrix portion of the chain corresponds to 235–268 (VDVVKTRFVNSVPEQYTSVPNCAMTMLTKEGPLA). Residue C256 is modified to Cysteine sulfenic acid (-SOH). The helical transmembrane segment at 269–291 (FFKGFVPSFLRLGSWNVIMFVCF) threads the bilayer. K271 lines the fatty acid 16:0 pocket. Residues 292 to 309 (EQLKRELMKSGRTVDCAT) are Mitochondrial intermembrane-facing.

It belongs to the mitochondrial carrier (TC 2.A.29) family. In terms of assembly, most probably functions as a monomer. Binds one purine nucleotide per monomer. However, has also been suggested to function as a homodimer or a homotetramer. Tightly associates with cardiolipin in the mitochondrion inner membrane; may stabilize and regulate its activity. May undergo sulfenylation upon cold exposure. May increase the sensitivity of UCP1 thermogenic function to the activation by noradrenaline probably through structural effects. Post-translationally, may undergo ubiquitin-mediated proteasomal degradation.

Its subcellular location is the mitochondrion inner membrane. The enzyme catalyses H(+)(in) = H(+)(out). Its activity is regulated as follows. Has no constitutive proton transporter activity and has to be activated by long-chain fatty acids/LCFAs. Inhibited by purine nucleotides. Both purine nucleotides and LCFAs bind the cytosolic side of the transporter and directly compete to activate or inhibit it. Activated by noradrenaline and reactive oxygen species. Despite lacking canonical translational encoding for selenocysteine, a small pool of the protein has been observed to selectively incorporate selenocysteine at 'Cys-256'. Selenocysteine-modified protein is highly sensitive to redox modification and may constitute a pool of protein highly sensitive to activation by elevated levels of reactive oxygen species (ROS). Its function is as follows. Mitochondrial protein responsible for thermogenic respiration, a specialized capacity of brown adipose tissue and beige fat that participates in non-shivering adaptive thermogenesis to temperature and diet variations and more generally to the regulation of energy balance. Functions as a long-chain fatty acid/LCFA and proton symporter, simultaneously transporting one LCFA and one proton through the inner mitochondrial membrane. However, LCFAs remaining associated with the transporter via their hydrophobic tails, it results in an apparent transport of protons activated by LCFAs. Thereby, dissipates the mitochondrial proton gradient and converts the energy of substrate oxydation into heat instead of ATP. Regulates the production of reactive oxygen species/ROS by mitochondria. The protein is Mitochondrial brown fat uncoupling protein 1 of Canis lupus familiaris (Dog).